Reading from the N-terminus, the 78-residue chain is Large ribosomal subunit protein bL28 (78 aa).

This sequence belongs to the bacterial ribosomal protein bL28 family.

This chain is Large ribosomal subunit protein bL28, found in Hamiltonella defensa subsp. Acyrthosiphon pisum (strain 5AT).